We begin with the raw amino-acid sequence, 841 residues long: Toll-like receptor 4 (841 aa).

Positions 1 to 23 (MMARARLAAALIPATAILSCLRT) are cleaved as a signal peptide. Topologically, residues 24-632 (ESWDPCVQVV…FRNATCQLSK (609 aa)) are extracellular. A disulfide bond links Cys29 and Cys40. Asn35 and Asn73 each carry an N-linked (GlcNAc...) asparagine glycan. 7 LRR repeats span residues 55–76 (STKM…NFSS), 79–100 (ELQV…TFQG), 103–124 (HLST…AFSG), 127–148 (SLQK…PIGH), 151–172 (NLKE…EYFS), 176–197 (NLEH…DVKV), and 205–225 (NLSL…TFKE). N-linked (GlcNAc...) asparagine glycosylation is found at Asn205, Asn238, Asn282, and Asn309. Cys281 and Cys306 are joined by a disulfide. LRR repeat units lie at residues 352–373 (SLKK…FQLP), 374–394 (SLQY…CSHT), 400–422 (NLKH…MGLE), 423–444 (QLEH…SAFL), 448–469 (NLRY…IFTG), 472–495 (SLQT…FTEL), 497–518 (NLTV…AFHS), 521–542 (SLQV…LYEP), and 545–568 (SLRI…QNLP). Cys390 and Cys391 are oxidised to a cystine. N-linked (GlcNAc...) asparagine glycans are attached at residues Asn497 and Asn526. Asn575 carries N-linked (GlcNAc...) asparagine glycosylation. The LRRCT domain occupies 579 to 630 (NAFACVCEHQSFLQWVKDQRQLLVGAEQMMCAEPLDMEDMPVLSFRNATCQL). 2 disulfides stabilise this stretch: Cys583–Cys609 and Cys585–Cys628. N-linked (GlcNAc...) asparagine glycosylation is present at Asn625. Residues 633–653 (TIISVSVVTVLLVSVVGVLVY) form a helical membrane-spanning segment. The Cytoplasmic portion of the chain corresponds to 654-841 (KFYFHLMLLA…TNPQEATTST (188 aa)). The region spanning 673 to 816 (SIYDAFVIYS…VFWRRLRKAL (144 aa)) is the TIR domain. The tract at residues 820–841 (KPQSPEGTADAETNPQEATTST) is disordered. The segment covering 830–841 (AETNPQEATTST) has biased composition (polar residues).

It belongs to the Toll-like receptor family. As to quaternary structure, belongs to the lipopolysaccharide (LPS) receptor, a multi-protein complex containing at least CD14, LY96 and TLR4. Binding to bacterial LPS leads to homodimerization. Interacts with LY96 via the extracellular domain. Interacts with MYD88 and TIRAP via their respective TIR domains. Interacts with TICAM2. Interacts with NOX4. Interacts with CNPY3 and HSP90B1; this interaction is required for proper folding in the endoplasmic reticulum. Interacts with MAP3K21; this interaction leads to negative regulation of TLR4 signaling. Interacts with CD36, following CD36 stimulation by oxLDL or amyloid-beta 42, and forms a heterodimer with TLR6. The trimeric complex is internalized and triggers inflammatory response. LYN kinase activity facilitates TLR4-TLR6 heterodimerization and signal initiation. Interacts with TICAM1 in response to LPS in a WDFY1-dependent manner. Interacts with WDFY1 in response to LPS. Interacts with SMPDL3B. Interacts with CEACAM1; upon lipopolysaccharide stimulation, forms a complex including TLR4 and the phosphorylated form of SYK and CEACAM1, which in turn, recruits PTPN6 that dephosphorylates SYK, reducing the production of reactive oxygen species (ROS) and lysosome disruption, which in turn, reduces the activity of the inflammasome. Interacts with RFTN1; the interaction occurs in response to lipopolysaccharide stimulation. Interacts with SCIMP; the interaction occurs in response to lipopolysaccharide stimulation and is enhanced by phosphorylation of SCIMP by LYN. This interaction facilitates the phosphorylation of TLR4 by LYN which elicits a selective cytokine response in macrophages. Interacts with TRAF3IP3. Interacts with TREM1; this interaction enhances TLR4-mediated inflammatory response. Interacts with ZG16B/PAUF. Interacts with CD82; this interaction inhibits TLR4-mediated signaling pathway. Post-translationally, phosphorylated on tyrosine residues by LYN after binding lipopolysaccharide. In terms of processing, ubiquitinated by RNF128 via 'Lys-28'-linked polyubiquitin chains, leading to proteasomal degradation.

Its subcellular location is the cell membrane. It localises to the early endosome. It is found in the cell projection. The protein resides in the ruffle. Transmembrane receptor that functions as a pattern recognition receptor recognizing pathogen- and damage-associated molecular patterns (PAMPs and DAMPs) to induce innate immune responses via downstream signaling pathways. At the plasma membrane, cooperates with LY96 to mediate the innate immune response to bacterial lipopolysaccharide (LPS). Also involved in LPS-independent inflammatory responses triggered by free fatty acids, such as palmitate, and Ni(2+). Mechanistically, acts via MYD88, TIRAP and TRAF6, leading to NF-kappa-B activation, cytokine secretion and the inflammatory response. Alternatively, CD14-mediated TLR4 internalization via endocytosis is associated with the initiation of a MYD88-independent signaling via the TICAM1-TBK1-IRF3 axis leading to type I interferon production. In addition to the secretion of proinflammatory cytokines, initiates the activation of NLRP3 inflammasome and formation of a positive feedback loop between autophagy and NF-kappa-B signaling cascade. In complex with TLR6, promotes inflammation in monocytes/macrophages by associating with TLR6 and the receptor CD86. Upon ligand binding, such as oxLDL or amyloid-beta 42, the TLR4:TLR6 complex is internalized and triggers inflammatory response, leading to NF-kappa-B-dependent production of CXCL1, CXCL2 and CCL9 cytokines, via MYD88 signaling pathway, and CCL5 cytokine, via TICAM1 signaling pathway. In myeloid dendritic cells, vesicular stomatitis virus glycoprotein G but not LPS promotes the activation of IRF7, leading to type I IFN production in a CD14-dependent manner. The protein is Toll-like receptor 4 (TLR4) of Bos taurus (Bovine).